We begin with the raw amino-acid sequence, 60 residues long: Mastoparan-D (60 aa).

The first 27 residues, 1-27, serve as a signal peptide directing secretion; that stretch reads MKNTILILFTAFIALLGFFGMSAEALA. 4 AXPX repeats span residues 27-30, 31-34, 35-38, and 41-44; these read ADPI, ADPV, AGPN, and ADPE. Positions 28–45 are excised as a propeptide; sequence DPIADPVAGPNPEADPEA. A Leucine amide modification is found at Leu-59.

The protein belongs to the MCD family. Mastoparan subfamily. As to expression, expressed by the venom gland.

The protein resides in the secreted. It is found in the target cell membrane. In terms of biological role, antimicrobial and mast cell degranulating peptide. Has broad spectrum antibacterial activity against both Gram-positive and Gram-negative bacteria (S.aureus MIC=24-32 ug/ml, S.xylosus MIC=2 ug/ml, S.alactolyticus MIC=16 ug/ml, C.koseri MIC=4 ug/ml, E.coli MIC=8 ug/ml, K.pneumoniae MIC=32 ug/ml, P.aerugiosa MIC=128 ug/ml, S.choleraesuis MIC=16 ug/ml, S.typhimurium MIC=32 ug/ml, V.parahamelytics MIC=32 ug/ml). Affects membrane permeability of E.coli. Shows hemolytic activities on sheep, chicken and human erythrocytes. Its mast cell degranulation activity may be related to the activation of G-protein coupled receptors in mast cells as well as interaction with other proteins located in cell endosomal membranes in the mast cells. The protein is Mastoparan-D of Vespa ducalis (Black-tailed hornet).